Reading from the N-terminus, the 39-residue chain is Cytochrome b559 subunit beta (39 aa).

The chain crosses the membrane as a helical span at residues 14–30; that stretch reads WLAVHGLAVPTVFFLGS. Heme is bound at residue His18.

It belongs to the PsbE/PsbF family. As to quaternary structure, heterodimer of an alpha subunit and a beta subunit. PSII is composed of 1 copy each of membrane proteins PsbA, PsbB, PsbC, PsbD, PsbE, PsbF, PsbH, PsbI, PsbJ, PsbK, PsbL, PsbM, PsbT, PsbX, PsbY, PsbZ, Psb30/Ycf12, at least 3 peripheral proteins of the oxygen-evolving complex and a large number of cofactors. It forms dimeric complexes. The cofactor is heme b.

The protein localises to the plastid. It is found in the chloroplast thylakoid membrane. In terms of biological role, this b-type cytochrome is tightly associated with the reaction center of photosystem II (PSII). PSII is a light-driven water:plastoquinone oxidoreductase that uses light energy to abstract electrons from H(2)O, generating O(2) and a proton gradient subsequently used for ATP formation. It consists of a core antenna complex that captures photons, and an electron transfer chain that converts photonic excitation into a charge separation. The sequence is that of Cytochrome b559 subunit beta from Cedrus deodara (Deodar cedar).